Reading from the N-terminus, the 495-residue chain is Glycerol kinase (495 aa).

Residue Thr13 coordinates ADP. ATP-binding residues include Thr13, Thr14, and Ser15. Thr13 contacts sn-glycerol 3-phosphate. Arg17 contributes to the ADP binding site. Arg83, Glu84, Tyr135, and Asp244 together coordinate sn-glycerol 3-phosphate. The glycerol site is built by Arg83, Glu84, Tyr135, Asp244, and Gln245. Residues Thr266 and Gly309 each contribute to the ADP site. Positions 266, 309, 313, and 410 each coordinate ATP. 2 residues coordinate ADP: Gly410 and Asn414.

This sequence belongs to the FGGY kinase family.

The catalysed reaction is glycerol + ATP = sn-glycerol 3-phosphate + ADP + H(+). The protein operates within polyol metabolism; glycerol degradation via glycerol kinase pathway; sn-glycerol 3-phosphate from glycerol: step 1/1. With respect to regulation, inhibited by fructose 1,6-bisphosphate (FBP). Functionally, key enzyme in the regulation of glycerol uptake and metabolism. Catalyzes the phosphorylation of glycerol to yield sn-glycerol 3-phosphate. The protein is Glycerol kinase of Shewanella sediminis (strain HAW-EB3).